Reading from the N-terminus, the 349-residue chain is MYISNLRLQNFRNIPAKSFDFKNSINFIVGKNGSGKTSILESIYFLSHSRSFRSSQLNRIINHNADEFIIYTKAYNPDEITISLSRKKNSNNISKLNLEIQKNHTEITRNLPIQLINPESFNIINSGAQQRCKVLDWGAFYLDKTFLKIWQQTKFLVKQRNSALKQNYPYSYILSIDKKLCEFAEILDYKRQAYFTKLKPKIYEILSHFNPNLQLDIDYFRGWNLHKSLAQVLEESFNYDNKYKVTNHGPHKADIVLSVSHKPIQDIFSRGQQKLLICALKLAQGEIHNSENDNKCIYLIDDITSELDSIHTLTLFNYLKQLKSQVFITTTEKNKINEFIDTNSYILEI.

30–37 (GKNGSGKT) lines the ATP pocket.

This sequence belongs to the RecF family.

The protein localises to the cytoplasm. Functionally, the RecF protein is involved in DNA metabolism; it is required for DNA replication and normal SOS inducibility. RecF binds preferentially to single-stranded, linear DNA. It also seems to bind ATP. The sequence is that of DNA replication and repair protein RecF from Francisella tularensis subsp. tularensis (strain FSC 198).